Here is a 1874-residue protein sequence, read N- to C-terminus: MAGGSGARETRCRQGSRPGSPGSEVPAASVTGPRAEARPAGGGGGSRRAAPDRCSGGVPSAAWQHPFLNVFRHFRVDEWKRSSKEGDVAVVTDKVLKSAVYRIRGSVSASNYIQLPRTSTQSLGLTGRYLYVLFRPVPTKHFVIHLDVSTEDGQVIRVSFSNLFKEFKSSTTWLQFPFVFETKTPRRDLAGVALPRARWTCLQLDLRDILMFYLGRHYSHLKSIRLCASLLVRNLYTSDLCFDPAVTVTEARRAKLSVNPMPREMAFPVPKGESWHDNYIHVRFPSDCSKVPDEQDEKSCSPPEAVFLGRMSRHLPHPGVLGKPLLSSKSPVAQACSSALPCQVLSASSRLPEVSRTYRYREVSSVSASSIQSQRPSVRDEVPDAHTVSGERHVLADRSSGVPMALEDIGSCRLFLPDPVLRLKGVIGFGGHSTQWALWTKDGVAVVYPCHAVIIVLQIDTGQQRFFLGHTDKVSALALNGSDTLLASAQVQPPSMVRLWDFQTGSCLSLFRSPLHTICSLSFSGSGALLCGVGKDRHGRTVVVAWSTEQAGLGGEVVVLAKVHTDFDIRAFQVAFFDETRMASCGRGSVRLWRLRGGVLRSCAVDLGEYCSLELTDLAFAQALDGHCAPSAGTLFVCSHSGHILEIDHQRMSVQHVRRLLPARSPGAPLAEKQNFSVGSGIAISSLSVSTATCAVGSEDGYLRLWPLDFSSVLLEAEHDGPVSSVSFSPDGLRVLSTTTSGHLGFLDVPSREYTVLARSHMAPVLALSTEPNRGQMATVSLDHTVRIWDLATLQQLYDFSSSEDTPCAVAFHPTMPNFFCGFSSGAVRSFSLESSGVLVEHTRHRGAITSLVITLDGRFLFSSCSQGSLVQYSCADSQCCVLRVAANMVCQDGRPNPNILAVSGDSCRLAFVGPSKCMVTIVESASLDELLRVDVSTLNLASNHLDWAVAICFSPGNSGHLLVSTSSNKVVVLDAVSGHTLRELSSVRSRACCSLALSEDAHLLLAATDRTITVWDYPTQANPSCQVYIGHSEPVHAVAFTPDQLQVISVGDAIFLWDILATPERDGGDHEAPPGHEAGSSSGQLDDLASGASGLPRQQVPIPFQALPPPLSSHDRLLDGSTGTFSTSDEEGLCEENHVSEALLQGQAPTPHVLVDREASGAGDAPRETAGSSWTPAERPSPHSHMSEWSLRSGKAGLPTRPDSYKHFTPRYKTSPRVKSVYFPPIGRERLRLKAIVGYNGNGRANMVWRPDTGFFAYTCGRLVVVEDLHSGTQRHWLGHSQEISTLALNQDGQILASASCCGNTAARCQIRIWDVPKGLCRHLLSHHDTAVQALAFSPDDEFLVTLGDYADRNLALWSMATYELLSSTRLLEPVHGVAFNPWDANELICVGTNAITFWLLQHHGADTCFQVHREPIPEELGASELTSLCYGASPLLYCGSSSGQVCVWDTGTGHCFLAWEADDGEIGVLLCSGSRLISGSNTKRLRLWAVGVVPELRRKGSSARSSSVFMERELTLDGAVVSASFDSGMDMGVVGTTAGTIWYISWTEGTSTRLISGHRTKVNEVVFSPGESHCATCGEDGSVRVWSLASMELVIQFQVLNQSCLCLAWTPPSCELPEQQQVVAGYSDGTLRVFSISRTAMELKMHPHRTALTAIAFSTDGQTILSGDKDGLVAISHPCTGMTFRVLSDHRGAPISAIQSTSKEYGDLGVEGVELWLAASGDQRVSIWVSDWLRDRCELLEWLSFPAPAVSEAPGLLPPSLAAFCPWDKAILVCVGLGAHEEVIFYSLRQKQVIQKTPLPFFAMSLSLSPGSQLMVVGFAECMMRLLDCASGTAQDLEGHDDSVHLCRFTPSGRLLFTAAHNEILVWEVTDP.

The disordered stretch occupies residues 1 to 59; sequence MAGGSGARETRCRQGSRPGSPGSEVPAASVTGPRAEARPAGGGGGSRRAAPDRCSGGVP. 2 positions are modified to phosphoserine: Ser-16 and Ser-20. The binds with microtubules stretch occupies residues 59–267; that stretch reads PSAAWQHPFL…VNPMPREMAF (209 aa). Ser-301 is modified (phosphoserine). WD repeat units follow at residues 469–512, 514–556, 563–603, 677–716, 718–757, 760–799, 844–883, 944–984, 988–1026, and 1031–1068; these read GHTD…SLFR, PLHT…LGGE, VHTD…LRSC, SVGS…VLLE, EHDG…YTVL, SHMA…QLYD, RHRG…CCVL, NHLD…TLRE, VRSR…NPSC, and GHSE…ERDG. Basic and acidic residues predominate over residues 1066–1075; sequence RDGGDHEAPP. 2 disordered regions span residues 1066–1132 and 1160–1211; these read RDGG…SDEE and ASGA…HFTP. WD repeat units lie at residues 1280–1325, 1328–1369, 1371–1412, 1422–1460, 1462–1500, 1559–1598, 1601–1646, 1649–1688, 1695–1740, 1800–1839, and 1841–1874; these read GHSQ…CRHL, HHDT…LLSS, RLLE…TCFQ, LGAS…CFLA, EADD…ELRR, GHRT…LVIQ, VLNQ…MELK, PHRT…TFRV, APIS…DRCE, PLPF…AQDL, and GHDD…VTDP.

Belongs to the WD repeat WDR90/POC16 family.

It localises to the cytoplasm. The protein resides in the cytoskeleton. Its subcellular location is the microtubule organizing center. The protein localises to the centrosome. It is found in the centriole. It localises to the centriolar satellite. Microtubule-binding protein that plays a crucial role in ensuring inner core protein localization within the centriole core, as well as in maintaining the microtubule wall integrity and the overall centriole roundness and stability. Required for efficient primary cilium formation. This Mus musculus (Mouse) protein is WD repeat-containing protein 90 (Wdr90).